Reading from the N-terminus, the 270-residue chain is Phospholysine phosphohistidine inorganic pyrophosphate phosphatase (270 aa).

Positions 17 and 19 each coordinate Mg(2+). Substrate is bound by residues 17 to 19 (DIS), 54 to 55 (TN), and K189. Mg(2+) is bound at residue D214.

This sequence belongs to the HAD-like hydrolase superfamily. As to quaternary structure, homodimer. It depends on Mg(2+) as a cofactor.

Its subcellular location is the cytoplasm. The protein localises to the nucleus. It carries out the reaction diphosphate + H2O = 2 phosphate + H(+). In terms of biological role, phosphatase that hydrolyzes imidodiphosphate, 3-phosphohistidine and 6-phospholysine. Has broad substrate specificity and can also hydrolyze inorganic diphosphate, but with lower efficiency. The protein is Phospholysine phosphohistidine inorganic pyrophosphate phosphatase (Lhpp) of Rattus norvegicus (Rat).